Consider the following 121-residue polypeptide: Prefoldin subunit beta (121 aa).

The protein belongs to the prefoldin subunit beta family. As to quaternary structure, heterohexamer of two alpha and four beta subunits.

The protein localises to the cytoplasm. Functionally, molecular chaperone capable of stabilizing a range of proteins. Seems to fulfill an ATP-independent, HSP70-like function in archaeal de novo protein folding. This is Prefoldin subunit beta (pfdB) from Methanothermobacter thermautotrophicus (strain ATCC 29096 / DSM 1053 / JCM 10044 / NBRC 100330 / Delta H) (Methanobacterium thermoautotrophicum).